The chain runs to 384 residues: 1-deoxy-D-xylulose 5-phosphate reductoisomerase (384 aa).

The NADPH site is built by Thr10, Gly11, Ser12, Ile13, Gly36, and Asn123. A 1-deoxy-D-xylulose 5-phosphate-binding site is contributed by Lys124. Position 125 (Glu125) interacts with NADPH. Residue Asp149 coordinates Mn(2+). Positions 150, 151, 175, and 198 each coordinate 1-deoxy-D-xylulose 5-phosphate. Glu151 contributes to the Mn(2+) binding site. Gly204 provides a ligand contact to NADPH. Residues Ser211, Asn216, Lys217, and Glu220 each coordinate 1-deoxy-D-xylulose 5-phosphate. Residue Glu220 coordinates Mn(2+).

Belongs to the DXR family. It depends on Mg(2+) as a cofactor. Mn(2+) serves as cofactor.

The enzyme catalyses 2-C-methyl-D-erythritol 4-phosphate + NADP(+) = 1-deoxy-D-xylulose 5-phosphate + NADPH + H(+). The protein operates within isoprenoid biosynthesis; isopentenyl diphosphate biosynthesis via DXP pathway; isopentenyl diphosphate from 1-deoxy-D-xylulose 5-phosphate: step 1/6. In terms of biological role, catalyzes the NADPH-dependent rearrangement and reduction of 1-deoxy-D-xylulose-5-phosphate (DXP) to 2-C-methyl-D-erythritol 4-phosphate (MEP). This is 1-deoxy-D-xylulose 5-phosphate reductoisomerase from Chlorobium phaeovibrioides (strain DSM 265 / 1930) (Prosthecochloris vibrioformis (strain DSM 265)).